A 68-amino-acid chain; its full sequence is Large ribosomal subunit protein bL31 (68 aa).

Zn(2+) contacts are provided by Cys17, Cys19, Cys37, and Cys40.

The protein belongs to the bacterial ribosomal protein bL31 family. Type A subfamily. As to quaternary structure, part of the 50S ribosomal subunit. Zn(2+) is required as a cofactor.

Its function is as follows. Binds the 23S rRNA. The chain is Large ribosomal subunit protein bL31 from Dehalococcoides mccartyi (strain CBDB1).